A 467-amino-acid polypeptide reads, in one-letter code: Protein PHOSPHATE STARVATION RESPONSE 3 (467 aa).

Positions 227–266 (MSLPVSSCSDQEDLQDARSPAKVQLSSSRSSSGTASCNKP) are disordered. One can recognise an HTH myb-type domain in the interval 262 to 322 (SCNKPRLRWT…HLQKYRLAKY (61 aa)). Residues 293–318 (PKGVLKLMKVEGLTIYHIKSHLQKYR) constitute a DNA-binding region (H-T-H motif). Over residues 327-337 (KEDKKQEEKKT) the composition is skewed to basic and acidic residues. Disordered regions lie at residues 327–353 (KEDK…KSAQ) and 400–467 (RESI…VHDE). A compositionally biased stretch (polar residues) spans 402–412 (SISSMTSTTEG). 2 stretches are compositionally biased toward basic and acidic residues: residues 419–428 (PMEKTEDKAE) and 438–467 (RITD…VHDE).

The protein localises to the nucleus. Functionally, transcription factor involved in phosphate starvation signaling. Binds to P1BS, an imperfect palindromic sequence 5'-GNATATNC-3', to promote the expression of inorganic phosphate (Pi) starvation-responsive genes. Functionally redundant with PHR1 and PHR2 in regulating Pi starvation response and Pi homeostasis. This is Protein PHOSPHATE STARVATION RESPONSE 3 from Oryza sativa subsp. indica (Rice).